We begin with the raw amino-acid sequence, 278 residues long: MSSYISLLKPRVIWLLILASVAGYIYGGGGVDSRLFSLLAVAFLSTGGSAAFNHYWERDIDALMTRTFKRPLPSGLITPNAALAYSLALSATGISLGFLLLGLLPGLFVLLGWLFYAVVYTIVLKRRTWLNIFGGGFAGNAVFLGGYALAKGTVDLPAVLISFAIYLWIPSHIWALAFKYRGDYKRAGVPMLPALIKEERAVAVISAINAAAAAYILWLYLQFGGGAGGALVALGVAATIATSIYAAVKKTEEAMWKMYKASSPILALFLIALILSRL.

The next 9 membrane-spanning stretches (helical) occupy residues 12–32 (VIWLLILASVAGYIYGGGGVD), 35–55 (LFSLLAVAFLSTGGSAAFNHY), 76–96 (LITPNAALAYSLALSATGISL), 98–118 (FLLLGLLPGLFVLLGWLFYAV), 129–149 (WLNIFGGGFAGNAVFLGGYAL), 158–178 (AVLISFAIYLWIPSHIWALAF), 199–221 (ERAVAVISAINAAAAAYILWLYL), 226–248 (GAGGALVALGVAATIATSIYAAV), and 255–275 (MWKMYKASSPILALFLIALIL).

This sequence belongs to the UbiA prenyltransferase family. Protoheme IX farnesyltransferase subfamily.

The protein localises to the cell membrane. The enzyme catalyses heme b + (2E,6E)-farnesyl diphosphate + H2O = Fe(II)-heme o + diphosphate. Its pathway is porphyrin-containing compound metabolism; heme O biosynthesis; heme O from protoheme: step 1/1. Converts heme B (protoheme IX) to heme O by substitution of the vinyl group on carbon 2 of heme B porphyrin ring with a hydroxyethyl farnesyl side group. In Pyrobaculum aerophilum (strain ATCC 51768 / DSM 7523 / JCM 9630 / CIP 104966 / NBRC 100827 / IM2), this protein is Protoheme IX farnesyltransferase 1.